The primary structure comprises 1770 residues: U3 small nucleolar RNA-associated protein 10 (1770 aa).

Transmembrane regions (helical) follow at residues 499–519 and 528–548; these read ILGL…FLSS and LTFL…RLLA. Residues 1730 to 1768 form an HEAT repeat; sequence MVPIIAELLEDDNEEVESEVRGGLVRVMENVLGEPFDRY.

The protein belongs to the HEATR1/UTP10 family. Component of the ribosomal small subunit (SSU) processome.

It localises to the nucleus. It is found in the nucleolus. The protein localises to the membrane. Involved in nucleolar processing of pre-18S ribosomal RNA. Involved in ribosome biosynthesis. This is U3 small nucleolar RNA-associated protein 10 from Candida glabrata (strain ATCC 2001 / BCRC 20586 / JCM 3761 / NBRC 0622 / NRRL Y-65 / CBS 138) (Yeast).